The primary structure comprises 864 residues: Calphotin (864 aa).

Positions 816–858 (LQTTDVSLLAIAATLDAIGEKLKDQKARNQQVMDRLCEIEKIL) are leucine-zipper.

As to quaternary structure, homodimer. Soma and axons of photoreceptor cells of compound eyes and ocelli.

It is found in the cytoplasm. Functionally, plays important roles in both rhabdomere development and in photoreceptor cell survival. Might function as a calcium-sequestering 'sponge' to regulate the amount of free cytoplasmic calcium. It binds 0.3 mole of Ca(2+) per mole of protein. This chain is Calphotin (Cpn), found in Drosophila melanogaster (Fruit fly).